The primary structure comprises 454 residues: Ornithine aminotransferase (454 aa).

Lys280 is modified (N6-(pyridoxal phosphate)lysine).

The protein belongs to the class-III pyridoxal-phosphate-dependent aminotransferase family. Requires pyridoxal 5'-phosphate as cofactor.

Its subcellular location is the cytoplasm. The enzyme catalyses a 2-oxocarboxylate + L-ornithine = L-glutamate 5-semialdehyde + an L-alpha-amino acid. It participates in amino-acid biosynthesis; L-proline biosynthesis; L-glutamate 5-semialdehyde from L-ornithine: step 1/1. The sequence is that of Ornithine aminotransferase (otaA) from Emericella nidulans (strain FGSC A4 / ATCC 38163 / CBS 112.46 / NRRL 194 / M139) (Aspergillus nidulans).